We begin with the raw amino-acid sequence, 446 residues long: tRNA-2-methylthio-N(6)-dimethylallyladenosine synthase (446 aa).

The region spanning 2-119 (KKIYIKTFGC…LPELIAQRRE (118 aa)) is the MTTase N-terminal domain. [4Fe-4S] cluster-binding residues include Cys-11, Cys-48, Cys-82, Cys-156, Cys-160, and Cys-163. The Radical SAM core domain occupies 142 to 376 (RVEGGAAFVS…RIEAQAQGVN (235 aa)). A TRAM domain is found at 377-440 (RSMVGSVQRV…PHSLRGEAVT (64 aa)).

This sequence belongs to the methylthiotransferase family. MiaB subfamily. As to quaternary structure, monomer. Requires [4Fe-4S] cluster as cofactor.

The protein localises to the cytoplasm. It carries out the reaction N(6)-dimethylallyladenosine(37) in tRNA + (sulfur carrier)-SH + AH2 + 2 S-adenosyl-L-methionine = 2-methylsulfanyl-N(6)-dimethylallyladenosine(37) in tRNA + (sulfur carrier)-H + 5'-deoxyadenosine + L-methionine + A + S-adenosyl-L-homocysteine + 2 H(+). Its function is as follows. Catalyzes the methylthiolation of N6-(dimethylallyl)adenosine (i(6)A), leading to the formation of 2-methylthio-N6-(dimethylallyl)adenosine (ms(2)i(6)A) at position 37 in tRNAs that read codons beginning with uridine. The protein is tRNA-2-methylthio-N(6)-dimethylallyladenosine synthase of Thiobacillus denitrificans (strain ATCC 25259 / T1).